Here is a 345-residue protein sequence, read N- to C-terminus: Phosphate acyltransferase (345 aa).

The protein belongs to the PlsX family. Homodimer. Probably interacts with PlsY.

Its subcellular location is the cytoplasm. The catalysed reaction is a fatty acyl-[ACP] + phosphate = an acyl phosphate + holo-[ACP]. It functions in the pathway lipid metabolism; phospholipid metabolism. Functionally, catalyzes the reversible formation of acyl-phosphate (acyl-PO(4)) from acyl-[acyl-carrier-protein] (acyl-ACP). This enzyme utilizes acyl-ACP as fatty acyl donor, but not acyl-CoA. In Wolbachia pipientis subsp. Culex pipiens (strain wPip), this protein is Phosphate acyltransferase.